A 926-amino-acid polypeptide reads, in one-letter code: MASATVDFGIGRILSVLENETLLLSGVHGEIDKMKKELLIMKSFLEDTHKHGGNGSTTTTTQLFQTFVANTRDLAYQIEDILDEFGYHIHGYRSCAKIWRAFHFPRYMWARHSIAQKLGMVNVMIQSISDSMKRYYHSENYQAALLPPIDDGDAKWVNNISESSLFFSENSLVGIDAPKGKLIGRLLSPEPQRIVVAVVGMGGSGKTTLSANIFKSQSVRRHFESYAWVTISKSYVIEDVFRTMIKEFYKEADTQIPAELYSLGYRELVEKLVEYLQSKRYIVVLDDVWTTGLWREISIALPDGIYGSRVMMTTRDMNVASFPYGIGSTKHEIELLKEDEAWVLFSNKAFPASLEQCRTQNLEPIARKLVERCQGLPLAIASLGSMMSTKKFESEWKKVYSTLNWELNNNHELKIVRSIMFLSFNDLPYPLKRCFLYCSLFPVNYRMKRKRLIRMWMAQRFVEPIRGVKAEEVADSYLNELVYRNMLQVILWNPFGRPKAFKMHDVIWEIALSVSKLERFCDVYNDDSDGDDAAETMENYGSRHLCIQKEMTPDSIRATNLHSLLVCSSAKHKMELLPSLNLLRALDLEDSSISKLPDCLVTMFNLKYLNLSKTQVKELPKNFHKLVNLETLNTKHSKIEELPLGMWKLKKLRYLITFRRNEGHDSNWNYVLGTRVVPKIWQLKDLQVMDCFNAEDELIKNLGCMTQLTRISLVMVRREHGRDLCDSLNKIKRIRFLSLTSIDEEEPLEIDDLIATASIEKLFLAGKLERVPSWFNTLQNLTYLGLRGSQLQENAILSIQTLPRLVWLSFYNAYMGPRLRFAQGFQNLKILEIVQMKHLTEVVIEDGAMFELQKLYVRACRGLEYVPRGIENLINLQELHLIHVSNQLVERIRGEGSVDRSRVKHIPAIKHYFRTDNGSFYVSLSS.

The tract at residues 10–45 is leucine-zipper; the sequence is IGRILSVLENETLLLSGVHGEIDKMKKELLIMKSFL. Residues 153–467 enclose the NB-ARC domain; that stretch reads DAKWVNNISE…AQRFVEPIRG (315 aa). ATP is bound at residue 200 to 207; the sequence is GMGGSGKT. 11 LRR repeats span residues 561–580, 581–603, 605–625, 626–649, 686–707, 708–731, 756–777, 778–804, 825–836, 837–859, and 876–900; these read LHSL…LPSL, NLLR…LVTM, NLKY…NFHK, LVNL…MWKL, LQVM…CMTQ, LTRI…LNKI, TASI…WFNT, LQNL…TLPR, FQNLKILEIVQM, KHLT…YVRA, and LQEL…SVDR.

The protein belongs to the disease resistance NB-LRR family. Interacts directly with RIN4 via its N-terminal region. Interacts (via N-terminus) with RIN2 and RIN3 (via C-terminus). Interacts with TIP49A, a protein known to interact with the TATA binding protein complex (TBP). Binds to MORC1/CRT1. Interacts, via its NB-ARC domain, with RIN13.

It localises to the endomembrane system. The protein resides in the cell membrane. Functionally, disease resistance (R) protein that specifically recognizes the AvrRpm1 type III effector avirulence protein from Pseudomonas syringae. Resistance proteins guard the plant against pathogens that contain an appropriate avirulence protein via an indirect interaction with this avirulence protein. That triggers a defense system including the hypersensitive response (HR), which restricts the pathogen growth. Acts via its interaction with RIN4, and probably triggers the plant resistance when RIN4 is phosphorylated by AvrRpm1. It is then degraded at the onset of the hypersensitive response. The sequence is that of Disease resistance protein RPM1 from Arabidopsis thaliana (Mouse-ear cress).